Consider the following 359-residue polypeptide: tRNA-specific 2-thiouridylase MnmA (359 aa).

Residues 7–14 (GLSGGVDS) and Leu33 each bind ATP. Cys94 serves as the catalytic Nucleophile. Cysteines 94 and 193 form a disulfide. Gly119 contributes to the ATP binding site. Residues 143–145 (KDQ) form an interaction with tRNA region. Catalysis depends on Cys193, which acts as the Cysteine persulfide intermediate. An interaction with tRNA region spans residues 298–299 (RY).

It belongs to the MnmA/TRMU family.

The protein localises to the cytoplasm. It catalyses the reaction S-sulfanyl-L-cysteinyl-[protein] + uridine(34) in tRNA + AH2 + ATP = 2-thiouridine(34) in tRNA + L-cysteinyl-[protein] + A + AMP + diphosphate + H(+). Its function is as follows. Catalyzes the 2-thiolation of uridine at the wobble position (U34) of tRNA, leading to the formation of s(2)U34. This is tRNA-specific 2-thiouridylase MnmA from Trichodesmium erythraeum (strain IMS101).